The sequence spans 169 residues: Ribosome maturation factor RimM (169 aa).

Positions 95–169 (EDGYYWTDLI…QITVDWELGY (75 aa)) constitute a PRC barrel domain.

Belongs to the RimM family. Binds ribosomal protein uS19.

The protein localises to the cytoplasm. In terms of biological role, an accessory protein needed during the final step in the assembly of 30S ribosomal subunit, possibly for assembly of the head region. Essential for efficient processing of 16S rRNA. May be needed both before and after RbfA during the maturation of 16S rRNA. It has affinity for free ribosomal 30S subunits but not for 70S ribosomes. The chain is Ribosome maturation factor RimM from Nitrosomonas europaea (strain ATCC 19718 / CIP 103999 / KCTC 2705 / NBRC 14298).